The primary structure comprises 476 residues: Aspartyl/glutamyl-tRNA(Asn/Gln) amidotransferase subunit B (476 aa).

The protein belongs to the GatB/GatE family. GatB subfamily. In terms of assembly, heterotrimer of A, B and C subunits.

It carries out the reaction L-glutamyl-tRNA(Gln) + L-glutamine + ATP + H2O = L-glutaminyl-tRNA(Gln) + L-glutamate + ADP + phosphate + H(+). It catalyses the reaction L-aspartyl-tRNA(Asn) + L-glutamine + ATP + H2O = L-asparaginyl-tRNA(Asn) + L-glutamate + ADP + phosphate + 2 H(+). Functionally, allows the formation of correctly charged Asn-tRNA(Asn) or Gln-tRNA(Gln) through the transamidation of misacylated Asp-tRNA(Asn) or Glu-tRNA(Gln) in organisms which lack either or both of asparaginyl-tRNA or glutaminyl-tRNA synthetases. The reaction takes place in the presence of glutamine and ATP through an activated phospho-Asp-tRNA(Asn) or phospho-Glu-tRNA(Gln). This Lactobacillus johnsonii (strain CNCM I-12250 / La1 / NCC 533) protein is Aspartyl/glutamyl-tRNA(Asn/Gln) amidotransferase subunit B.